The chain runs to 1091 residues: Self-sufficient cytochrome P450 monooxygenase CYP505E1 (1091 aa).

Cys433 is a binding site for heme. In terms of domain architecture, Flavodoxin-like spans 528 to 669; the sequence is ICFFYGSNSG…DLEAWEETSL (142 aa). FMN-binding positions include 534-538 and 613-645; these read SNSGT and VFGC…TRLA. Positions 707 to 935 constitute an FAD-binding FR-type domain; that stretch reads KDLMEARVTT…RPAKEAFHLP (229 aa).

In the N-terminal section; belongs to the cytochrome P450 family. Requires FAD as cofactor. It depends on FMN as a cofactor. The cofactor is heme.

The catalysed reaction is 2 oxidized [cytochrome P450] + NADPH = 2 reduced [cytochrome P450] + NADP(+) + H(+). The enzyme catalyses an organic molecule + reduced [NADPH--hemoprotein reductase] + O2 = an alcohol + oxidized [NADPH--hemoprotein reductase] + H2O + H(+). It carries out the reaction dodecanoate + reduced [NADPH--hemoprotein reductase] + O2 = 5-hydroxydodecanoate + oxidized [NADPH--hemoprotein reductase] + H2O + H(+). It catalyses the reaction tetradecanoate + reduced [NADPH--hemoprotein reductase] + O2 = 7-hydroxytetradecanoate + oxidized [NADPH--hemoprotein reductase] + H2O + H(+). The catalysed reaction is dodecan-1-ol + reduced [NADPH--hemoprotein reductase] + O2 = 1,5-dodecanediol + oxidized [NADPH--hemoprotein reductase] + H2O + H(+). The enzyme catalyses dodecan-1-ol + reduced [NADPH--hemoprotein reductase] + O2 = 1,4-dodecanediol + oxidized [NADPH--hemoprotein reductase] + H2O + H(+). It carries out the reaction dodecan-1-ol + reduced [NADPH--hemoprotein reductase] + O2 = 1,6-dodecanediol + oxidized [NADPH--hemoprotein reductase] + H2O + H(+). Self-sufficient cytochrome P450 monooxygenase that catalyzes the regioselective in-chain hydroxylation of alkanes, fatty alcohols, and fatty acids at the omega-7 position. Performs hydroxylation of C10-C16 n-alkanes and C12 and C14 fatty alcohols; and thereby enables the one step biocatalytic synthesis of rare alcohols such as 5-dodecanol and 7-tetradecanol. Converts 1-dodecanol into 1,5-dodecanediol as major product with very little sub-terminally hydroxylated products with the 1,4-dodecanediol and 1,6-dodecanediol more abundant. Converts dodecanoic acid to 5-hydroxydodecanoic acid which can be further converted into delta-dodecalactone by lactonization of the 5-hydroxy acid at low pH. Also gives sub-terminal hydroxylation of dodecanoic acid with 9-hydroxydodecanoic acid being the second most abundant product. The protein is Self-sufficient cytochrome P450 monooxygenase CYP505E1 of Aspergillus niger (strain ATCC MYA-4892 / CBS 513.88 / FGSC A1513).